The chain runs to 1072 residues: Translation initiation factor IF-2 (1072 aa).

2 disordered regions span residues 55–369 (ILDK…TGTA) and 426–452 (ELVDVSKNKERGQRKRTSGDTQSVSKQ). Low complexity-rich tracts occupy residues 91-100 (AEASQAAEPA), 108-118 (EPATFAAEEPV), 126-179 (APRA…AEVA), and 186-212 (EAPQAPVEAPRAAVPAPAAAQPRPSVQ). Over residues 218 to 230 (PQPPPRSPVPPAV) the composition is skewed to pro residues. Residues 231-245 (RTPSSTSSSATVVSR) are compositionally biased toward low complexity. Residues 253 to 307 (QRGGPGGGRPGGPGGPGGRPGGPGGPGGRPGGPGGPGGRPGGPGGPGGRPGGPGG) show a composition bias toward gly residues. The span at 426–436 (ELVDVSKNKER) shows a compositional bias: basic and acidic residues. One can recognise a tr-type G domain in the interval 570–737 (PRPPVVAIMG…NLALQAEVLE (168 aa)). The segment at 579–586 (GHVDHGKT) is G1. A GTP-binding site is contributed by 579 to 586 (GHVDHGKT). A G2 region spans residues 604-608 (GITQH). The segment at 625–628 (DTPG) is G3. GTP contacts are provided by residues 625–629 (DTPGH) and 679–682 (NKMD). The G4 stretch occupies residues 679–682 (NKMD). The tract at residues 715–717 (SAK) is G5.

The protein belongs to the TRAFAC class translation factor GTPase superfamily. Classic translation factor GTPase family. IF-2 subfamily.

Its subcellular location is the cytoplasm. Its function is as follows. One of the essential components for the initiation of protein synthesis. Protects formylmethionyl-tRNA from spontaneous hydrolysis and promotes its binding to the 30S ribosomal subunits. Also involved in the hydrolysis of GTP during the formation of the 70S ribosomal complex. This chain is Translation initiation factor IF-2, found in Myxococcus xanthus (strain DK1622).